We begin with the raw amino-acid sequence, 155 residues long: Small ribosomal subunit protein uS7 (155 aa).

This sequence belongs to the universal ribosomal protein uS7 family. In terms of assembly, part of the 30S ribosomal subunit. Contacts proteins S9 and S11.

In terms of biological role, one of the primary rRNA binding proteins, it binds directly to 16S rRNA where it nucleates assembly of the head domain of the 30S subunit. Is located at the subunit interface close to the decoding center, probably blocks exit of the E-site tRNA. The sequence is that of Small ribosomal subunit protein uS7 from Kosmotoga olearia (strain ATCC BAA-1733 / DSM 21960 / TBF 19.5.1).